We begin with the raw amino-acid sequence, 209 residues long: PF03932 family protein CutC (209 aa).

Its subcellular location is the cytoplasm. The polypeptide is PF03932 family protein CutC (Streptococcus pyogenes serotype M6 (strain ATCC BAA-946 / MGAS10394)).